The chain runs to 537 residues: Protein disulfide isomerase-like 1-5 (537 aa).

A signal peptide spans 1–29 (MSLIPKPISKVSTFTFILLILLSFTIIIA). Residues 58–184 (LQEDRPEQQS…IVIWVQKKTG (127 aa)) form the Thioredoxin 1 domain. C106 serves as the catalytic Nucleophile. 3 N-linked (GlcNAc...) asparagine glycosylation sites follow: N160, N364, and N416. Residues 380 to 526 (LLESDPSPNS…IAVFINEELL (147 aa)) enclose the Thioredoxin 2 domain. Residues C447 and C450 each act as nucleophile in the active site. Residues C447 and C450 are joined by a disulfide bond. N530 carries an N-linked (GlcNAc...) asparagine glycan. The short motif at 534–537 (KDEL) is the Prevents secretion from ER element.

This sequence belongs to the protein disulfide isomerase family. In terms of tissue distribution, widely expressed.

It localises to the endoplasmic reticulum lumen. It catalyses the reaction Catalyzes the rearrangement of -S-S- bonds in proteins.. Its function is as follows. Acts as a protein-folding catalyst that interacts with nascent polypeptides to catalyze the formation, isomerization, and reduction or oxidation of disulfide bonds. This chain is Protein disulfide isomerase-like 1-5 (PDIL1-5), found in Arabidopsis thaliana (Mouse-ear cress).